A 311-amino-acid polypeptide reads, in one-letter code: Fructose-1,6-bisphosphatase class 1 (311 aa).

The Mg(2+) site is built by glutamate 90, aspartate 110, leucine 112, and aspartate 113. Substrate contacts are provided by residues 113 to 116, tyrosine 221, and lysine 251; that span reads DGSS. Glutamate 257 is a binding site for Mg(2+).

This sequence belongs to the FBPase class 1 family. Homotetramer. Requires Mg(2+) as cofactor.

It localises to the cytoplasm. It catalyses the reaction beta-D-fructose 1,6-bisphosphate + H2O = beta-D-fructose 6-phosphate + phosphate. The protein operates within carbohydrate biosynthesis; gluconeogenesis. In Methanospirillum hungatei JF-1 (strain ATCC 27890 / DSM 864 / NBRC 100397 / JF-1), this protein is Fructose-1,6-bisphosphatase class 1.